A 215-amino-acid polypeptide reads, in one-letter code: Pyrrolidone-carboxylate peptidase (215 aa).

Residues Glu-80, Cys-143, and His-167 contribute to the active site.

The protein belongs to the peptidase C15 family. Homotetramer.

The protein resides in the cytoplasm. The enzyme catalyses Release of an N-terminal pyroglutamyl group from a polypeptide, the second amino acid generally not being Pro.. Removes 5-oxoproline from various penultimate amino acid residues except L-proline. The chain is Pyrrolidone-carboxylate peptidase from Bacillus cereus (strain ATCC 10987 / NRS 248).